The primary structure comprises 482 residues: Probable glycine dehydrogenase (decarboxylating) subunit 2 (482 aa).

Lys-264 carries the N6-(pyridoxal phosphate)lysine modification.

It belongs to the GcvP family. C-terminal subunit subfamily. In terms of assembly, the glycine cleavage system is composed of four proteins: P, T, L and H. In this organism, the P 'protein' is a heterodimer of two subunits. The cofactor is pyridoxal 5'-phosphate.

It carries out the reaction N(6)-[(R)-lipoyl]-L-lysyl-[glycine-cleavage complex H protein] + glycine + H(+) = N(6)-[(R)-S(8)-aminomethyldihydrolipoyl]-L-lysyl-[glycine-cleavage complex H protein] + CO2. Functionally, the glycine cleavage system catalyzes the degradation of glycine. The P protein binds the alpha-amino group of glycine through its pyridoxal phosphate cofactor; CO(2) is released and the remaining methylamine moiety is then transferred to the lipoamide cofactor of the H protein. This is Probable glycine dehydrogenase (decarboxylating) subunit 2 from Treponema denticola (strain ATCC 35405 / DSM 14222 / CIP 103919 / JCM 8153 / KCTC 15104).